Consider the following 238-residue polypeptide: Partner of Y14 and mago (238 aa).

Residues 1-183 (MTTYATDSQG…GADGHSDLSK (183 aa)) form a disordered region. Basic and acidic residues-rich tracts occupy residues 65-77 (QKAR…EQRK) and 123-133 (LEQKQKEEQKA). Over residues 136–155 (RQQAQDQRNSKQQQSQNQSK) the composition is skewed to low complexity. Residues 176–233 (DGHSDLSKKLRKLRKKIREIEVIEERLRASDGPRPDKDQIEKAKRKAEILKEIEELER) adopt a coiled-coil conformation.

The protein belongs to the pym family. Interacts (via N-terminus) with mago and tsu/Y14; the interaction is direct.

The protein localises to the cytoplasm. The protein resides in the nucleus. Functionally, regulator of the exon junction complex (EJC), a multiprotein complex that associates immediately upstream of the exon-exon junction on mRNAs and serves as a positional landmarks for the intron exon structure of genes and directs post-transcriptional processes in the cytoplasm such as mRNA export, nonsense-mediated mRNA decay (NMD) or translation. In Culex quinquefasciatus (Southern house mosquito), this protein is Partner of Y14 and mago.